A 94-amino-acid polypeptide reads, in one-letter code: Pyrimidine/purine nucleoside phosphorylase (94 aa).

It belongs to the nucleoside phosphorylase PpnP family.

The enzyme catalyses a purine D-ribonucleoside + phosphate = a purine nucleobase + alpha-D-ribose 1-phosphate. It catalyses the reaction adenosine + phosphate = alpha-D-ribose 1-phosphate + adenine. It carries out the reaction cytidine + phosphate = cytosine + alpha-D-ribose 1-phosphate. The catalysed reaction is guanosine + phosphate = alpha-D-ribose 1-phosphate + guanine. The enzyme catalyses inosine + phosphate = alpha-D-ribose 1-phosphate + hypoxanthine. It catalyses the reaction thymidine + phosphate = 2-deoxy-alpha-D-ribose 1-phosphate + thymine. It carries out the reaction uridine + phosphate = alpha-D-ribose 1-phosphate + uracil. The catalysed reaction is xanthosine + phosphate = alpha-D-ribose 1-phosphate + xanthine. Catalyzes the phosphorolysis of diverse nucleosides, yielding D-ribose 1-phosphate and the respective free bases. Can use uridine, adenosine, guanosine, cytidine, thymidine, inosine and xanthosine as substrates. Also catalyzes the reverse reactions. The sequence is that of Pyrimidine/purine nucleoside phosphorylase from Saccharophagus degradans (strain 2-40 / ATCC 43961 / DSM 17024).